A 489-amino-acid polypeptide reads, in one-letter code: Cytochrome P450 monooxygenase trt6 (489 aa).

A helical membrane pass occupies residues 10-30 (SLWSFGLWILVILSPVLFFAS). N-linked (GlcNAc...) asparagine glycans are attached at residues N364 and N407. C430 serves as a coordination point for heme.

The protein belongs to the cytochrome P450 family. Requires heme as cofactor.

The protein localises to the membrane. It functions in the pathway secondary metabolite biosynthesis; terpenoid biosynthesis. In terms of biological role, cytochrome P450 monooxygenase; part of the gene cluster that mediates the biosynthesis of terretonin, a fungal meroterpenoid that acts as a mycotoxin. The first step of the pathway is the synthesis of 3,5-dimethylorsellinic acid (DMOA) by the polyketide synthase trt4. DMOA is then prenylated into farnesyl-DMOA by the polyprenyl transferase trt2. Methylation by the methyltransferase trt5 then leads to farnesyl-DMOA methyl ester which is further subject to epoxidation by the FAD-dependent monooxygenase trt8 to yield epoxyfarnesyl-DMOA methyl ester. Cyclization of epoxyfarnesyl-DMOA methyl ester by the terpene cyclase trt1 leads to a tetracycle intermediate which is in turn converted to preterretonin. Dehydrogenase trt9 comes next to transform preterretonin to preterrenoid. The FAD-dependent monooxygenase trt3 is then required for the C-hydroxylation at C16 of preterrenoid to yield terrenoid. The cytochrome P450 trt6 catalyzes three successive oxidations to transform terrenoid into an unstable intermediate, which then undergoes the D-ring expansion and unusual rearrangement of the methoxy group to afford the core skeleton of terretonin. Trt14 catalyzes the D-ring expansion of terretonin involving intramolecular methoxy rearrangement as well as the hydrolysis of the expanded D-ring and the methyl ester moiety. Finally, the nonheme iron-dependent dioxygenase trt7 accomplishes the last two oxidation reactions steps to complete the biosynthesis of terretonin. Terretonin C is produced via spontaneous decarboxylation of the terretonin precursor. Another shunt product of the terretonin biosynthesis is dihydrofarnesyl-DMOA, derived from epoxyfarnesyl-DMOA through hydrolysis of the epoxide. This chain is Cytochrome P450 monooxygenase trt6, found in Aspergillus terreus (strain NIH 2624 / FGSC A1156).